Here is a 42-residue protein sequence, read N- to C-terminus: Potassium channel toxin gamma-KTx 1.3 (42 aa).

4 disulfide bridges follow: Cys-5–Cys-23, Cys-11–Cys-34, Cys-20–Cys-39, and Cys-24–Cys-41.

The protein belongs to the ergtoxin family. Gamma-KTx 1 subfamily. Expressed by the venom gland.

It localises to the secreted. Blocks Kv11/ERG potassium channels. This Centruroides gracilis (Slenderbrown scorpion) protein is Potassium channel toxin gamma-KTx 1.3.